Reading from the N-terminus, the 441-residue chain is Chromosome partition protein MukF (441 aa).

The interval 208-236 (LTETSSTLRELQDTLEAAGDKLQTSLLSI) is leucine-zipper.

The protein belongs to the MukF family. In terms of assembly, interacts, and probably forms a ternary complex, with MukE and MukB via its C-terminal region. The complex formation is stimulated by calcium or magnesium. It is required for an interaction between MukE and MukB.

It is found in the cytoplasm. It localises to the nucleoid. Its function is as follows. Involved in chromosome condensation, segregation and cell cycle progression. May participate in facilitating chromosome segregation by condensation DNA from both sides of a centrally located replisome during cell division. Not required for mini-F plasmid partitioning. Probably acts via its interaction with MukB and MukE. Overexpression results in anucleate cells. It has a calcium binding activity. The polypeptide is Chromosome partition protein MukF (Pectobacterium atrosepticum (strain SCRI 1043 / ATCC BAA-672) (Erwinia carotovora subsp. atroseptica)).